A 107-amino-acid polypeptide reads, in one-letter code: UPF0145 protein Sfri_2095 (107 aa).

Belongs to the UPF0145 family.

This is UPF0145 protein Sfri_2095 from Shewanella frigidimarina (strain NCIMB 400).